The primary structure comprises 555 residues: Glucose-6-phosphate isomerase (555 aa).

Glutamate 353 functions as the Proton donor in the catalytic mechanism. Catalysis depends on residues histidine 384 and lysine 516.

It belongs to the GPI family.

It is found in the cytoplasm. The catalysed reaction is alpha-D-glucose 6-phosphate = beta-D-fructose 6-phosphate. The protein operates within carbohydrate biosynthesis; gluconeogenesis. It functions in the pathway carbohydrate degradation; glycolysis; D-glyceraldehyde 3-phosphate and glycerone phosphate from D-glucose: step 2/4. In terms of biological role, catalyzes the reversible isomerization of glucose-6-phosphate to fructose-6-phosphate. This chain is Glucose-6-phosphate isomerase, found in Methylobacillus flagellatus (strain ATCC 51484 / DSM 6875 / VKM B-1610 / KT).